A 610-amino-acid chain; its full sequence is Terminase, large subunit (610 aa).

Positions 30–94 (RKDEDGIHWI…SRYMGLPNLK (65 aa)) are ssDNA-binding. The interval 131-301 (DYGVIKVQLR…NHFYDIWTAA (171 aa)) is ATPase activity. ATP contacts are provided by Q138 and Q143. A Walker A motif motif is present at residues 161-167 (SRQLGKT). R202 contributes to the ATP binding site. The Walker B motif signature appears at 251–256 (MIYIDE). Catalysis depends on E256, which acts as the For ATPase activity. Positions 285–287 (TTT) match the ATPase coupling motif. Residues 328-352 (IFDDGWQWSIQTINGSSLAQFRQEH) form a binding to the portal protein region. The interval 360 to 559 (SGTLISGMKL…FGWLSTQSKF (200 aa)) is nuclease activity. 3 residues coordinate Mg(2+): D401, E458, and D542.

This sequence belongs to the Tequatrovirus large terminase family. Interacts with the terminase small subunit; the active complex is composed of a pentamer of terminase large subunits and a dodecamer of terminase small subunits. Interacts with the portal protein. Interacts with the RNA polymerase sigma factor gp55. Mg(2+) is required as a cofactor. Phosphorylated.

Its activity is regulated as follows. Stimulated up to 50 to 100-fold by the terminase small subunit. Modestly activated by portal protein and single-stranded binding protein gp32 multimers. Functionally, the terminase large subunit acts as an ATP driven molecular motor necessary for viral DNA translocation into empty capsids and as an endonuclease that cuts the viral genome to initiate and to end a packaging reaction. The terminase lies at a unique vertex of the procapsid and is composed of two subunits, a small terminase subunit involved in viral DNA recognition (packaging sequence), and a large terminase subunit possessing endonucleolytic and ATPase activities. Both terminase subunits heterooligomerize and are docked on the portal protein to form the packaging machine. The terminase large subunit exhibits endonuclease activity and cleaves the viral genome concatemer once the capsid is full (headful packaging). Once the capsid is packaged with the DNA, the terminase complex is substituted by the tail. The protein is Terminase, large subunit (17) of Escherichia coli (Bacteriophage T4).